Here is a 57-residue protein sequence, read N- to C-terminus: UPF0391 membrane protein Smed_4051 (57 aa).

Helical transmembrane passes span 4-24 and 33-53; these read WALI…SGIS and ILFY…LAVG.

The protein belongs to the UPF0391 family.

It localises to the cell membrane. The protein is UPF0391 membrane protein Smed_4051 of Sinorhizobium medicae (strain WSM419) (Ensifer medicae).